Reading from the N-terminus, the 440-residue chain is Phosphatidylglycerol--prolipoprotein diacylglyceryl transferase (440 aa).

The next 4 membrane-spanning stretches (helical) occupy residues 21-41 (VPIRAYALFIIAGIVAALLIG), 53-73 (GVIYDIALWTVPFGLVGGRLY), 96-116 (IWDGGLGIWGAVALGAVGAWI), and 122-142 (GIPLPAFADALAPGIILAQAI). Arginine 144 is a binding site for a 1,2-diacyl-sn-glycero-3-phospho-(1'-sn-glycerol). Helical transmembrane passes span 189–209 (VALVVQPTFLYELLWNLLIFV) and 256–276 (INSFTSTFVFIGAVVYLMAAP). The disordered stretch occupies residues 280-440 (EDPESLRGNQ…ARLRDRLSGR (161 aa)). Over residues 299 to 330 (EPATVAATTEAATEGVAAPADGAEAAGADATA) the composition is skewed to low complexity. The segment covering 332-346 (RPEESAEPDVEKPES) has biased composition (basic and acidic residues). A compositionally biased stretch (acidic residues) spans 347 to 417 (EETEAEAAEE…PEQPVAEEPE (71 aa)). Residues 424–440 (ETKRRWGARLRDRLSGR) are compositionally biased toward basic and acidic residues.

Belongs to the Lgt family.

It localises to the cell membrane. The catalysed reaction is L-cysteinyl-[prolipoprotein] + a 1,2-diacyl-sn-glycero-3-phospho-(1'-sn-glycerol) = an S-1,2-diacyl-sn-glyceryl-L-cysteinyl-[prolipoprotein] + sn-glycerol 1-phosphate + H(+). Its pathway is protein modification; lipoprotein biosynthesis (diacylglyceryl transfer). Catalyzes the transfer of the diacylglyceryl group from phosphatidylglycerol to the sulfhydryl group of the N-terminal cysteine of a prolipoprotein, the first step in the formation of mature lipoproteins. The protein is Phosphatidylglycerol--prolipoprotein diacylglyceryl transferase of Mycobacterium avium (strain 104).